The primary structure comprises 243 residues: Putative C-type lectin protein A7 (243 aa).

The helical transmembrane segment at 23–43 threads the bilayer; the sequence is IFFILAATNLMIAAFALGCLA. Residues 116 to 223 form the C-type lectin domain; it reads GQKACYYVPP…CTTSKLCLCG (108 aa). 2 cysteine pairs are disulfide-bonded: cysteine 137-cysteine 222 and cysteine 198-cysteine 214.

The protein localises to the host membrane. The protein is Putative C-type lectin protein A7 (A7) of Alcelaphine herpesvirus 1 (strain C500) (AlHV-1).